The sequence spans 277 residues: Putative protease slr0021 (277 aa).

Residue Ser-85 is the Nucleophile of the active site. Lys-137 acts as the Proton donor/acceptor in catalysis.

This sequence belongs to the peptidase S49 family.

In Synechocystis sp. (strain ATCC 27184 / PCC 6803 / Kazusa), this protein is Putative protease slr0021.